Reading from the N-terminus, the 196-residue chain is Endonuclease V (196 aa).

Positions 37 and 98 each coordinate Mg(2+).

Belongs to the endonuclease V family. Requires Mg(2+) as cofactor.

It is found in the cytoplasm. The enzyme catalyses Endonucleolytic cleavage at apurinic or apyrimidinic sites to products with a 5'-phosphate.. Functionally, DNA repair enzyme involved in the repair of deaminated bases. Selectively cleaves double-stranded DNA at the second phosphodiester bond 3' to a deoxyinosine leaving behind the intact lesion on the nicked DNA. This Sulfurisphaera tokodaii (strain DSM 16993 / JCM 10545 / NBRC 100140 / 7) (Sulfolobus tokodaii) protein is Endonuclease V.